Consider the following 448-residue polypeptide: MICNRLWGDQTESSLKFFNISTEKMPWELIKALAQIKRVSAQVNYDLKLLDYERSQAIIAAVDEILSGNHKNEFPLSVWQTGSGTQSNMNMNEVLANRANELLRKNQINIVVHPNDHVNKSQSSNDVFPSAMHIAAVVNLKTKLIPVIKLLQKTFLKKSIEFRNIIKIGRTHLQDAIPLTLGQEISGWDFMLKNNTNHIQSTILDLSALALGGTAVGTGFSAHVEYAERVVLGLSKLIHHSFFSAPNKFESLSTCDAIVYSHGTLKGLAISMMKIANDIRLLSSGPQCGLGELIIPANEPGSSIMPGKVNPTQCESMTMSCCQVMGNDLSISLGGSSGQLQLNTYRPLIIYNFLQSIRLLTDSIKNFHDYCIVGIRPKFKRIEKLLNKSLMLVTALSSHIGYDKSAQIAQTAYLNGITLKAASIQSGYVTEKQFDDWVCPENMIYPDM.

Residues 83–85 (SGT), 113–116 (HPND), 123–125 (SSN), and threonine 171 each bind substrate. The Proton donor/acceptor role is filled by histidine 172. The active site involves serine 302. Substrate-binding positions include serine 303 and 308–310 (KVN).

The protein belongs to the class-II fumarase/aspartase family. Fumarase subfamily. As to quaternary structure, homotetramer.

It is found in the cytoplasm. It catalyses the reaction (S)-malate = fumarate + H2O. The protein operates within carbohydrate metabolism; tricarboxylic acid cycle; (S)-malate from fumarate: step 1/1. Involved in the TCA cycle. Catalyzes the stereospecific interconversion of fumarate to L-malate. This is Fumarate hydratase class II from Blochmanniella floridana.